A 175-amino-acid polypeptide reads, in one-letter code: Bifunctional protein PyrR (175 aa).

Residues 40–41 (TR), 102–110 (DDVLYTGRT), Arg-135, and Val-159 contribute to the substrate site. The short motif at 98-110 (VIIIDDVLYTGRT) is the PRPP-binding element.

It belongs to the purine/pyrimidine phosphoribosyltransferase family. PyrR subfamily. In terms of assembly, homodimer and homohexamer; in equilibrium.

It catalyses the reaction UMP + diphosphate = 5-phospho-alpha-D-ribose 1-diphosphate + uracil. Regulates transcriptional attenuation of the pyrimidine nucleotide (pyr) operon by binding in a uridine-dependent manner to specific sites on pyr mRNA. This disrupts an antiterminator hairpin in the RNA and favors formation of a downstream transcription terminator, leading to a reduced expression of downstream genes. Functionally, also displays a weak uracil phosphoribosyltransferase activity which is not physiologically significant. This is Bifunctional protein PyrR from Staphylococcus aureus (strain MSSA476).